The sequence spans 816 residues: MDVVQQKQDKQLQHQTQEQQQIREDQQEVPPQRPRQQNRWKPWWNSTADDEPNTGRIAEYPNGQGRSSPTTDFQDSVNSNNDNKGIWSKIASFATSRYRSAPIVVDDNTRYSQLNTEQINFLENEAKDIISKKSKSWCWYEAIPHISNSSNIIDSIDTPGIISVSGTGSAKCPLPLNKYPGEGGNPGYNVFINDSLILPSDNPLNFLHVQPLRTKVLNTIKNYYNFPNEQHLYLRQKKTALLKDKRIIIISVVGDLPEKYEQRSLESQRSAYYLSRKLSQNLAQEQPQRVLTLSFQCPLHNQDLIPTYKECVELLNHWAHLFKEVDSIFFVGVYHSVPLTLLLAKYIVQNNEVLEFDENTTVSVLSFQSCLQGYRFWDHSTDFTSNSYNNLGSNSSTNENDSNDHDSNNDFTTKSQQIKEKQLFQGIDKKQQDTLSKIKNYRRIDSSESKLVQDALDWLLFNWDTFRLTFFGKLYDNFMTISEKLAIDYNHPKILRNLWCNGKYMGIDLKNANNLNLDTDDEATSNINDVHVRTPNFESRLKIPTNRLFEITLWDILMITENLGYKQFIPIINLLSPFFISRSFNDYTLPPNIRKQYQNSNKIWLQEMDSKWKMNGHQLNYDQREGESLGSSSESLLPENISTVKDFLQFVQYQNEKSSDFVRIYSDIYDDDKVYKCFLYNTIFTKNPLSRKHLRLNIDLDTPTSILNTVNQYDLVWKIHDSFSKLIQLKNLPQREIPHALRLSISLNCFLDSTTSTSGPVFQRDTVEALRRLTEIWRTYQDWSPPTRGLKHLRDILSVLAMYDNPKNLINDVRRT.

Disordered regions lie at residues 1-81 (MDVV…NSNN) and 391-411 (LGSN…NNDF). The span at 28–44 (EVPPQRPRQQNRWKPWW) shows a compositional bias: low complexity. Polar residues predominate over residues 64-81 (QGRSSPTTDFQDSVNSNN). Phosphoserine is present on residues Ser76 and Ser79. A compositionally biased stretch (low complexity) spans 391–400 (LGSNSSTNEN).

This is an uncharacterized protein from Saccharomyces cerevisiae (strain ATCC 204508 / S288c) (Baker's yeast).